The primary structure comprises 109 residues: A-type ATP synthase subunit F (109 aa).

The protein belongs to the V-ATPase F subunit family. Has multiple subunits with at least A(3), B(3), C, D, E, F, H, I and proteolipid K(x).

Its subcellular location is the cell membrane. In terms of biological role, component of the A-type ATP synthase that produces ATP from ADP in the presence of a proton gradient across the membrane. The chain is A-type ATP synthase subunit F from Halorubrum lacusprofundi (strain ATCC 49239 / DSM 5036 / JCM 8891 / ACAM 34).